The sequence spans 94 residues: Small ribosomal subunit protein uS19 (94 aa).

It belongs to the universal ribosomal protein uS19 family.

Functionally, protein S19 forms a complex with S13 that binds strongly to the 16S ribosomal RNA. This is Small ribosomal subunit protein uS19 from Dictyoglomus thermophilum (strain ATCC 35947 / DSM 3960 / H-6-12).